The primary structure comprises 293 residues: Ribosomal RNA small subunit methyltransferase A (293 aa).

N36, L38, G63, E84, D111, and N132 together coordinate S-adenosyl-L-methionine.

Belongs to the class I-like SAM-binding methyltransferase superfamily. rRNA adenine N(6)-methyltransferase family. RsmA subfamily.

It is found in the cytoplasm. It carries out the reaction adenosine(1518)/adenosine(1519) in 16S rRNA + 4 S-adenosyl-L-methionine = N(6)-dimethyladenosine(1518)/N(6)-dimethyladenosine(1519) in 16S rRNA + 4 S-adenosyl-L-homocysteine + 4 H(+). Functionally, specifically dimethylates two adjacent adenosines (A1518 and A1519) in the loop of a conserved hairpin near the 3'-end of 16S rRNA in the 30S particle. May play a critical role in biogenesis of 30S subunits. The chain is Ribosomal RNA small subunit methyltransferase A from Treponema denticola (strain ATCC 35405 / DSM 14222 / CIP 103919 / JCM 8153 / KCTC 15104).